The following is a 425-amino-acid chain: Serine--tRNA ligase (425 aa).

Residue 232-234 (TSE) participates in L-serine binding. Residues 263–265 (RRE) and Val279 contribute to the ATP site. Glu286 is a binding site for L-serine. ATP is bound at residue 350–353 (EAVS). Thr387 contributes to the L-serine binding site.

This sequence belongs to the class-II aminoacyl-tRNA synthetase family. Type-1 seryl-tRNA synthetase subfamily. As to quaternary structure, homodimer. The tRNA molecule binds across the dimer.

The protein localises to the cytoplasm. It carries out the reaction tRNA(Ser) + L-serine + ATP = L-seryl-tRNA(Ser) + AMP + diphosphate + H(+). It catalyses the reaction tRNA(Sec) + L-serine + ATP = L-seryl-tRNA(Sec) + AMP + diphosphate + H(+). Its pathway is aminoacyl-tRNA biosynthesis; selenocysteinyl-tRNA(Sec) biosynthesis; L-seryl-tRNA(Sec) from L-serine and tRNA(Sec): step 1/1. Its function is as follows. Catalyzes the attachment of serine to tRNA(Ser). Is also able to aminoacylate tRNA(Sec) with serine, to form the misacylated tRNA L-seryl-tRNA(Sec), which will be further converted into selenocysteinyl-tRNA(Sec). This is Serine--tRNA ligase from Methanoculleus marisnigri (strain ATCC 35101 / DSM 1498 / JR1).